A 250-amino-acid chain; its full sequence is tRNA (guanine-N(1)-)-methyltransferase (250 aa).

S-adenosyl-L-methionine contacts are provided by residues G113 and 133 to 138; that span reads IGDYVL.

Belongs to the RNA methyltransferase TrmD family. In terms of assembly, homodimer.

It is found in the cytoplasm. The enzyme catalyses guanosine(37) in tRNA + S-adenosyl-L-methionine = N(1)-methylguanosine(37) in tRNA + S-adenosyl-L-homocysteine + H(+). Its function is as follows. Specifically methylates guanosine-37 in various tRNAs. The chain is tRNA (guanine-N(1)-)-methyltransferase from Shewanella amazonensis (strain ATCC BAA-1098 / SB2B).